Consider the following 1007-residue polypeptide: Serine/threonine-protein kinase PRP4 homolog (1007 aa).

The span at 1–10 (MAAAETQSLR) shows a compositional bias: polar residues. The interval 1-99 (MAAAETQSLR…EGMSPAKRTK (99 aa)) is disordered. A2 carries the N-acetylalanine modification. S8, S20, S23, and S32 each carry phosphoserine. 2 stretches are compositionally biased toward basic residues: residues 39 to 59 (KHSRHKKKKHKHRSKHKKHKH) and 67 to 81 (KKHKHKHKHKKHKRK). The segment covering 82–91 (EVIDASDKEG) has biased composition (basic and acidic residues). Phosphoserine occurs at positions 87 and 93. Residue K99 is modified to N6-acetyllysine; alternate. A Glycyl lysine isopeptide (Lys-Gly) (interchain with G-Cter in SUMO2); alternate cross-link involves residue K99. A Glycyl lysine isopeptide (Lys-Gly) (interchain with G-Cter in SUMO2) cross-link involves residue K111. A Glycyl lysine isopeptide (Lys-Gly) (interchain with G-Cter in SUMO2); alternate cross-link involves residue K117. K117 participates in a covalent cross-link: Glycyl lysine isopeptide (Lys-Gly) (interchain with G-Cter in SUMO1); alternate. S131 is modified (phosphoserine). A Phosphotyrosine modification is found at Y140. Disordered regions lie at residues 140-533 (YESG…EEED) and 559-583 (SNMSVPSEPSSPQSSTRTRSPSPDD). A phosphoserine mark is found at S142, S144, and S166. Positions 157-168 (GNRSSTRSSSTK) are enriched in low complexity. Residues K170 and K177 each participate in a glycyl lysine isopeptide (Lys-Gly) (interchain with G-Cter in SUMO2) cross-link. 2 stretches are compositionally biased toward basic residues: residues 179–202 (TTKKRSKSRSKERTRHRSDKKKSK) and 214–230 (RSKSKERKKSKSPSKRS). Residues S239, S241, S257, S277, S283, S292, and S294 each carry the phosphoserine modification. The segment covering 247-270 (RSQEKIGKARSPTDDKVKIEDKSK) has biased composition (basic and acidic residues). Over residues 302–315 (SKDRRSRSKERKSK) the composition is skewed to basic residues. Basic and acidic residues predominate over residues 316–325 (RSETDKEKKP). Phosphoserine occurs at positions 328, 354, 356, 366, and 368. A compositionally biased stretch (basic residues) spans 342–367 (PSRRPGRSPKRRSLSPKPRDKSRRSR). T385 is subject to Phosphothreonine. S387 bears the Phosphoserine mark. 2 stretches are compositionally biased toward basic and acidic residues: residues 395–408 (RSLERKRREPERRR) and 415–429 (RPRDDILSRRERSKD). S427, S431, and S437 each carry phosphoserine. Residues 438–497 (PTRRRSRSPIRRRSRSPLRRSRSPRRRSRSPRRRDRGRRSRSRLRRRSRSRGGRRRRSRS) show a composition bias toward basic residues. A phosphoserine mark is found at S518, S519, S520, S565, S569, S578, and S580. The span at 518–533 (SSSDDNLEDFDVEEED) shows a compositional bias: acidic residues. The span at 562-581 (SVPSEPSSPQSSTRTRSPSP) shows a compositional bias: low complexity. Glycyl lysine isopeptide (Lys-Gly) (interchain with G-Cter in SUMO2) cross-links involve residues K593 and K659. Positions 687-1003 (YNVYGYTGQG…INQALQHAFI (317 aa)) constitute a Protein kinase domain. Residues 693–701 (TGQGVFSNV) and K717 each bind ATP. At K717 the chain carries N6-acetyllysine. The active-site Proton acceptor is D815. Y849 is modified (phosphotyrosine). Position 852 is a phosphoserine (S852).

Belongs to the protein kinase superfamily. CMGC Ser/Thr protein kinase family. In terms of assembly, interacts with CLK1 C-terminus. Associates with the U5 snRNP and NCOR1 deacetylase complexes. Identified in the spliceosome C complex. In terms of processing, phosphorylated by CLK1. Autophosphorylated; phosphorylation inhibits interaction with its targets, such as PRPF6 or SMARCA4.

The protein localises to the nucleus. It localises to the chromosome. The protein resides in the centromere. It is found in the kinetochore. The catalysed reaction is L-seryl-[protein] + ATP = O-phospho-L-seryl-[protein] + ADP + H(+). The enzyme catalyses L-threonyl-[protein] + ATP = O-phospho-L-threonyl-[protein] + ADP + H(+). In terms of biological role, serine/threonine kinase involved in spliceosomal assembly as well as mitosis and signaling regulation. Connects chromatin mediated regulation of transcription and pre-mRNA splicing. During spliceosomal assembly, interacts with and phosphorylates PRPF6 and PRPF31, components of the U4/U6-U5 tri-small nuclear ribonucleoprotein (snRNP), to facilitate the formation of the spliceosome B complex. Plays a role in regulating transcription and the spindle assembly checkpoint (SAC). Associates with U5 snRNP and NCOR1 deacetylase complexes which may allow a coordination of pre-mRNA splicing with chromatin remodeling events involved in transcriptional regulation. Associates and probably phosphorylates SMARCA4 and NCOR1. Phosphorylates SRSF1. Associates with kinetochores during mitosis and is necessary for recruitment and maintenance of the checkpoint proteins such as MAD1L1 and MAD12L1 at the kinetochores. Phosphorylates and regulates the activity of the transcription factors such as ELK1 and KLF13. Phosphorylates nuclear YAP1 and WWTR1/TAZ which induces nuclear exclusion and regulates Hippo signaling pathway, involved in tissue growth control. The polypeptide is Serine/threonine-protein kinase PRP4 homolog (PRP4K) (Pongo abelii (Sumatran orangutan)).